A 119-amino-acid polypeptide reads, in one-letter code: Large ribosomal subunit protein uL22 (119 aa).

Belongs to the universal ribosomal protein uL22 family. Part of the 50S ribosomal subunit.

This protein binds specifically to 23S rRNA; its binding is stimulated by other ribosomal proteins, e.g. L4, L17, and L20. It is important during the early stages of 50S assembly. It makes multiple contacts with different domains of the 23S rRNA in the assembled 50S subunit and ribosome. In terms of biological role, the globular domain of the protein is located near the polypeptide exit tunnel on the outside of the subunit, while an extended beta-hairpin is found that lines the wall of the exit tunnel in the center of the 70S ribosome. This is Large ribosomal subunit protein uL22 from Chlorobium phaeovibrioides (strain DSM 265 / 1930) (Prosthecochloris vibrioformis (strain DSM 265)).